The sequence spans 136 residues: Small ribosomal subunit protein uS11 (136 aa).

Disordered regions lie at residues 1–20 (MAQRRSSQTTKKVKRKNVTN) and 115–136 (VTPQAHNGTRPPKRVLKREKAR). The span at 125–136 (PPKRVLKREKAR) shows a compositional bias: basic residues.

Belongs to the universal ribosomal protein uS11 family. Part of the 30S ribosomal subunit. Interacts with proteins S7 and S18. Binds to IF-3.

Functionally, located on the platform of the 30S subunit, it bridges several disparate RNA helices of the 16S rRNA. Forms part of the Shine-Dalgarno cleft in the 70S ribosome. The sequence is that of Small ribosomal subunit protein uS11 from Mycoplasmopsis pulmonis (strain UAB CTIP) (Mycoplasma pulmonis).